A 930-amino-acid chain; its full sequence is Translation initiation factor IF-2 (930 aa).

Residues 31 to 317 (FVKSASSTVE…RKSKRAKRAE (287 aa)) form a disordered region. The span at 61–78 (PAAGASNGAPAKPSAPGA) shows a compositional bias: low complexity. Composition is skewed to pro residues over residues 79 to 99 (RPGPRPGPPAPAQPKEPPAPA) and 108 to 120 (PAAPAPPAAPPAP). Residues 121–135 (AASAAPPSAPEAPSA) are compositionally biased toward low complexity. Composition is skewed to pro residues over residues 136–158 (RPTPGPRPGPGGPKPGAPKPAPR) and 178–192 (PRPQGPAGPGGPRPG). The span at 193–205 (PGAGGPRPGGGPR) shows a compositional bias: gly residues. Positions 212–242 (NMPPRPVGGPRPGGGPRPGGGPRPGAGPRPT) are enriched in pro residues. Over residues 244–301 (GGAGRPGGGGGGNYRGGGAGGGGGAGGAAAGGFRGRPGGGGGRPGQRGGAAGAFGRPG) the composition is skewed to gly residues. The span at 305–314 (KRGRKSKRAK) shows a compositional bias: basic residues. In terms of domain architecture, tr-type G spans 426 to 598 (FRPPVVTVMG…VVLTADASLD (173 aa)). Residues 435–442 (GHVDHGKT) are G1. 435-442 (GHVDHGKT) provides a ligand contact to GTP. The G2 stretch occupies residues 460-464 (GITQH). The G3 stretch occupies residues 485–488 (DTPG). Residues 485–489 (DTPGH) and 539–542 (NKID) each bind GTP. A G4 region spans residues 539–542 (NKID). The tract at residues 575 to 577 (SAK) is G5.

Belongs to the TRAFAC class translation factor GTPase superfamily. Classic translation factor GTPase family. IF-2 subfamily.

The protein resides in the cytoplasm. Its function is as follows. One of the essential components for the initiation of protein synthesis. Protects formylmethionyl-tRNA from spontaneous hydrolysis and promotes its binding to the 30S ribosomal subunits. Also involved in the hydrolysis of GTP during the formation of the 70S ribosomal complex. This chain is Translation initiation factor IF-2, found in Mycolicibacterium gilvum (strain PYR-GCK) (Mycobacterium gilvum (strain PYR-GCK)).